Here is a 274-residue protein sequence, read N- to C-terminus: S-methyl-5'-thioadenosine phosphorylase (274 aa).

Residues Ser20, 62 to 63 (RH), and 95 to 96 (SA) each bind phosphate. Met194 serves as a coordination point for substrate. Residue Thr195 coordinates phosphate. 218 to 220 (DYD) provides a ligand contact to substrate.

Belongs to the PNP/MTAP phosphorylase family. MTAP subfamily. Homohexamer. Dimer of a homotrimer.

It catalyses the reaction S-methyl-5'-thioadenosine + phosphate = 5-(methylsulfanyl)-alpha-D-ribose 1-phosphate + adenine. It functions in the pathway amino-acid biosynthesis; L-methionine biosynthesis via salvage pathway; S-methyl-5-thio-alpha-D-ribose 1-phosphate from S-methyl-5'-thioadenosine (phosphorylase route): step 1/1. Functionally, catalyzes the reversible phosphorylation of S-methyl-5'-thioadenosine (MTA) to adenine and 5-methylthioribose-1-phosphate. Involved in the breakdown of MTA, a major by-product of polyamine biosynthesis. Responsible for the first step in the methionine salvage pathway after MTA has been generated from S-adenosylmethionine. Has broad substrate specificity with 6-aminopurine nucleosides as preferred substrates. This chain is S-methyl-5'-thioadenosine phosphorylase, found in Hyperthermus butylicus (strain DSM 5456 / JCM 9403 / PLM1-5).